The following is a 705-amino-acid chain: Tyrosine decarboxylase (705 aa).

Over residues 22 to 32 (RIRNSLSPSRP) the composition is skewed to polar residues. The interval 22–81 (RIRNSLSPSRPSMSEATATGSSSSSRASTTIPSTPNMDVTPTVEDPRQNDNNASGMTRDE) is disordered. Residues 33 to 55 (SMSEATATGSSSSSRASTTIPST) are compositionally biased toward low complexity. At K380 the chain carries N6-(pyridoxal phosphate)lysine. A coiled-coil region spans residues 554 to 620 (VKAVIAEEDE…AQKQHESLAK (67 aa)). Positions 667–678 (HSQRPNRLSQSP) are enriched in polar residues. Residues 667–687 (HSQRPNRLSQSPGSAGSAFFD) form a disordered region.

It belongs to the group II decarboxylase family. Pyridoxal 5'-phosphate serves as cofactor. Expressed in the gonadal sheath projections in between the oocytes, in head RIM motor neurons and RIC interneurons.

The protein resides in the cytoplasm. It localises to the cell projection. It is found in the axon. Its subcellular location is the perikaryon. It catalyses the reaction L-tyrosine + H(+) = tyramine + CO2. In terms of biological role, required for the decarboxylation of tyrosine to tyramine, a precursor of octopamine but probably also itself a neurotransmitter. Involved in the regulation of egg laying, which is inhibited by tyramine. Also involved in controlling locomotion and head movements. Due to its involvement in octopamine biosynthesis, also required for crtc-1-dependent regulation of AMPK-mediated longevity which requires octopamine signaling. The chain is Tyrosine decarboxylase from Caenorhabditis elegans.